Reading from the N-terminus, the 336-residue chain is Ornithine carbamoyltransferase, catabolic (336 aa).

Residues 62–65 (STRT), glutamine 89, arginine 113, and 140–143 (HPTQ) contribute to the carbamoyl phosphate site. L-ornithine-binding positions include asparagine 172, aspartate 236, and 240-241 (SM). Carbamoyl phosphate-binding positions include 277-278 (CL) and arginine 322.

Belongs to the aspartate/ornithine carbamoyltransferase superfamily. OTCase family.

It localises to the cytoplasm. The enzyme catalyses carbamoyl phosphate + L-ornithine = L-citrulline + phosphate + H(+). It functions in the pathway amino-acid degradation; L-arginine degradation via ADI pathway; carbamoyl phosphate from L-arginine: step 2/2. Functionally, reversibly catalyzes the transfer of the carbamoyl group from carbamoyl phosphate (CP) to the N(epsilon) atom of ornithine (ORN) to produce L-citrulline. In Staphylococcus aureus (strain N315), this protein is Ornithine carbamoyltransferase, catabolic (arcB).